Reading from the N-terminus, the 224-residue chain is Twisted gastrulation protein homolog 1 (224 aa).

Positions 1–26 (MRSPCAALSASLLLLLLLLWARSSVG) are cleaved as a signal peptide. 3 N-linked (GlcNAc...) asparagine glycosylation sites follow: Asn53, Asn82, and Asn148.

Belongs to the twisted gastrulation protein family. Interacts with CHRD and BMP4. This interaction enhances CHRD/BMP4 complex formation. Interacts with BMP7.

The protein localises to the secreted. May be involved in dorsoventral axis formation. Seems to antagonize BMP signaling by forming ternary complexes with CHRD and BMPs, thereby preventing BMPs from binding to their receptors. In addition to the anti-BMP function, also has pro-BMP activity, partly mediated by cleavage and degradation of CHRD, which releases BMPs from ternary complexes. May be an important modulator of BMP-regulated cartilage development and chondrocyte differentiation. May play a role in thymocyte development. This is Twisted gastrulation protein homolog 1 (TWSG1) from Gallus gallus (Chicken).